Reading from the N-terminus, the 275-residue chain is Phosphonoacetaldehyde hydrolase (275 aa).

The active-site Nucleophile is the D15. The Mg(2+) site is built by D15 and A17. K56 (schiff-base intermediate with substrate) is an active-site residue. D189 serves as a coordination point for Mg(2+).

Belongs to the HAD-like hydrolase superfamily. PhnX family. Homodimer. The cofactor is Mg(2+).

The catalysed reaction is phosphonoacetaldehyde + H2O = acetaldehyde + phosphate + H(+). Its function is as follows. Involved in phosphonate degradation. This is Phosphonoacetaldehyde hydrolase from Pseudomonas fluorescens (strain SBW25).